The sequence spans 378 residues: 3-dehydroquinate synthase (378 aa).

Residues 115–119 (GVVGD), 139–140 (TS), Lys-152, and Lys-161 each bind NAD(+). Glu-194, His-256, and His-275 together coordinate Zn(2+).

It belongs to the sugar phosphate cyclases superfamily. Dehydroquinate synthase family. It depends on Co(2+) as a cofactor. The cofactor is Zn(2+). NAD(+) is required as a cofactor.

The protein localises to the cytoplasm. It catalyses the reaction 7-phospho-2-dehydro-3-deoxy-D-arabino-heptonate = 3-dehydroquinate + phosphate. The protein operates within metabolic intermediate biosynthesis; chorismate biosynthesis; chorismate from D-erythrose 4-phosphate and phosphoenolpyruvate: step 2/7. In terms of biological role, catalyzes the conversion of 3-deoxy-D-arabino-heptulosonate 7-phosphate (DAHP) to dehydroquinate (DHQ). This is 3-dehydroquinate synthase from Brucella canis (strain ATCC 23365 / NCTC 10854 / RM-666).